The following is a 338-amino-acid chain: Phenylalanine--tRNA ligase alpha subunit (338 aa).

A Mg(2+)-binding site is contributed by Glu253.

This sequence belongs to the class-II aminoacyl-tRNA synthetase family. Phe-tRNA synthetase alpha subunit type 1 subfamily. In terms of assembly, tetramer of two alpha and two beta subunits. Requires Mg(2+) as cofactor.

It localises to the cytoplasm. The catalysed reaction is tRNA(Phe) + L-phenylalanine + ATP = L-phenylalanyl-tRNA(Phe) + AMP + diphosphate + H(+). The chain is Phenylalanine--tRNA ligase alpha subunit from Gloeobacter violaceus (strain ATCC 29082 / PCC 7421).